Here is a 101-residue protein sequence, read N- to C-terminus: MDPVDPKLEPWNHPGSQPTTPCNKCYCKVCCWHCQVCFLNKGLGISYGRKKRRPRRGTPQGSKDHQNPVPKQPLPITSGNPTGSEKPKKEVASKTETDPLD.

The tract at residues 1–24 (MDPVDPKLEPWNHPGSQPTTPCNK) is interaction with human CREBBP. The tract at residues 1–48 (MDPVDPKLEPWNHPGSQPTTPCNKCYCKVCCWHCQVCFLNKGLGISYG) is transactivation. Cys-22, Cys-25, and Cys-27 together coordinate Zn(2+). The interval 22 to 37 (CNKCYCKVCCWHCQVC) is cysteine-rich. An N6-acetyllysine; by host PCAF modification is found at Lys-28. The Zn(2+) site is built by Cys-30, His-33, Cys-34, and Cys-37. A core region spans residues 38 to 48 (FLNKGLGISYG). Residues 48-101 (GRKKRRPRRGTPQGSKDHQNPVPKQPLPITSGNPTGSEKPKKEVASKTETDPLD) are disordered. The Nuclear localization signal, RNA-binding (TAR), and protein transduction signature appears at 49 to 57 (RKKRRPRRG). The interval 49–86 (RKKRRPRRGTPQGSKDHQNPVPKQPLPITSGNPTGSEK) is interaction with the host capping enzyme RNGTT. 2 positions are modified to N6-acetyllysine; by host EP300 and GCN5L2: Lys-50 and Lys-51. Arg-52 and Arg-53 each carry asymmetric dimethylarginine; by host PRMT6. Residue Lys-71 forms a Glycyl lysine isopeptide (Lys-Gly) (interchain with G-Cter in ubiquitin) linkage. Positions 85–101 (EKPKKEVASKTETDPLD) are enriched in basic and acidic residues.

This sequence belongs to the lentiviruses Tat family. In terms of assembly, interacts with host CCNT1. Associates with the P-TEFb complex composed at least of Tat, P-TEFb (CDK9 and CCNT1), TAR RNA, RNA Pol II. Recruits the HATs CREBBP, TAF1/TFIID, EP300, PCAF and GCN5L2. Interacts with host KAT5/Tip60; this interaction targets the latter to degradation. Interacts with the host deacetylase SIRT1. Interacts with host capping enzyme RNGTT; this interaction stimulates RNGTT. Binds to host KDR, and to the host integrins ITGAV/ITGB3 and ITGA5/ITGB1. Interacts with host KPNB1/importin beta-1 without previous binding to KPNA1/importin alpha-1. Interacts with EIF2AK2. Interacts with host nucleosome assembly protein NAP1L1; this interaction may be required for the transport of Tat within the nucleus, since the two proteins interact at the nuclear rim. Interacts with host C1QBP/SF2P32; this interaction involves lysine-acetylated Tat. Interacts with the host chemokine receptors CCR2, CCR3 and CXCR4. Interacts with host DPP4/CD26; this interaction may trigger an anti-proliferative effect. Interacts with host LDLR. Interacts with the host extracellular matrix metalloproteinase MMP1. Interacts with host PRMT6; this interaction mediates Tat's methylation. Interacts with, and is ubiquitinated by MDM2/Hdm2. Interacts with host PSMC3 and HTATIP2. Interacts with STAB1; this interaction may overcome SATB1-mediated repression of IL2 and IL2RA (interleukin) in T cells by binding to the same domain than HDAC1. Interacts (when acetylated) with human CDK13, thereby increasing HIV-1 mRNA splicing and promoting the production of the doubly spliced HIV-1 protein Nef. Interacts with host TBP; this interaction modulates the activity of transcriptional pre-initiation complex. Interacts with host RELA. Interacts with host PLSCR1; this interaction negatively regulates Tat transactivation activity by altering its subcellular distribution. In terms of processing, asymmetrical arginine methylation by host PRMT6 seems to diminish the transactivation capacity of Tat and affects the interaction with host CCNT1. Acetylation by EP300, CREBBP, GCN5L2/GCN5 and PCAF regulates the transactivation activity of Tat. EP300-mediated acetylation of Lys-50 promotes dissociation of Tat from the TAR RNA through the competitive binding to PCAF's bromodomain. In addition, the non-acetylated Tat's N-terminus can also interact with PCAF. PCAF-mediated acetylation of Lys-28 enhances Tat's binding to CCNT1. Lys-50 is deacetylated by SIRT1. Post-translationally, polyubiquitination by host MDM2 does not target Tat to degradation, but activates its transactivation function and fosters interaction with CCNT1 and TAR RNA. In terms of processing, phosphorylated by EIF2AK2 on serine and threonine residues adjacent to the basic region important for TAR RNA binding and function. Phosphorylation of Tat by EIF2AK2 is dependent on the prior activation of EIF2AK2 by dsRNA.

The protein resides in the host nucleus. The protein localises to the host nucleolus. It is found in the host cytoplasm. Its subcellular location is the secreted. Its function is as follows. Transcriptional activator that increases RNA Pol II processivity, thereby increasing the level of full-length viral transcripts. Recognizes a hairpin structure at the 5'-LTR of the nascent viral mRNAs referred to as the transactivation responsive RNA element (TAR) and recruits the cyclin T1-CDK9 complex (P-TEFb complex) that will in turn hyperphosphorylate the RNA polymerase II to allow efficient elongation. The CDK9 component of P-TEFb and other Tat-activated kinases hyperphosphorylate the C-terminus of RNA Pol II that becomes stabilized and much more processive. Other factors such as HTATSF1/Tat-SF1, SUPT5H/SPT5, and HTATIP2 are also important for Tat's function. Besides its effect on RNA Pol II processivity, Tat induces chromatin remodeling of proviral genes by recruiting the histone acetyltransferases (HATs) CREBBP, EP300 and PCAF to the chromatin. This also contributes to the increase in proviral transcription rate, especially when the provirus integrates in transcriptionally silent region of the host genome. To ensure maximal activation of the LTR, Tat mediates nuclear translocation of NF-kappa-B by interacting with host RELA. Through its interaction with host TBP, Tat may also modulate transcription initiation. Tat can reactivate a latently infected cell by penetrating in it and transactivating its LTR promoter. In the cytoplasm, Tat is thought to act as a translational activator of HIV-1 mRNAs. In terms of biological role, extracellular circulating Tat can be endocytosed by surrounding uninfected cells via the binding to several surface receptors such as CD26, CXCR4, heparan sulfate proteoglycans (HSPG) or LDLR. Neurons are rarely infected, but they internalize Tat via their LDLR. Through its interaction with nuclear HATs, Tat is potentially able to control the acetylation-dependent cellular gene expression. Modulates the expression of many cellular genes involved in cell survival, proliferation or in coding for cytokines or cytokine receptors. Tat plays a role in T-cell and neurons apoptosis. Tat induced neurotoxicity and apoptosis probably contribute to neuroAIDS. Circulating Tat also acts as a chemokine-like and/or growth factor-like molecule that binds to specific receptors on the surface of the cells, affecting many cellular pathways. In the vascular system, Tat binds to ITGAV/ITGB3 and ITGA5/ITGB1 integrins dimers at the surface of endothelial cells and competes with bFGF for heparin-binding sites, leading to an excess of soluble bFGF. In Homo sapiens (Human), this protein is Protein Tat.